A 427-amino-acid polypeptide reads, in one-letter code: Adenylosuccinate synthetase (427 aa).

GTP-binding positions include 12-18 (GDEGKGK) and 40-42 (GHT). The active-site Proton acceptor is the Asp13. 2 residues coordinate Mg(2+): Asp13 and Gly40. Residues 13–16 (DEGK), 38–41 (NAGH), Thr126, Arg140, Gln221, Thr236, and Arg299 contribute to the IMP site. Residue His41 is the Proton donor of the active site. 295-301 (STTKRPR) serves as a coordination point for substrate. Residues Arg301, 327–329 (KLD), and 409–411 (SVG) contribute to the GTP site.

Belongs to the adenylosuccinate synthetase family. In terms of assembly, homodimer. Mg(2+) is required as a cofactor.

Its subcellular location is the cytoplasm. The enzyme catalyses IMP + L-aspartate + GTP = N(6)-(1,2-dicarboxyethyl)-AMP + GDP + phosphate + 2 H(+). It functions in the pathway purine metabolism; AMP biosynthesis via de novo pathway; AMP from IMP: step 1/2. Functionally, plays an important role in the de novo pathway of purine nucleotide biosynthesis. Catalyzes the first committed step in the biosynthesis of AMP from IMP. The sequence is that of Adenylosuccinate synthetase from Borrelia recurrentis (strain A1).